Here is a 434-residue protein sequence, read N- to C-terminus: Enolase (434 aa).

Gln-165 is a binding site for (2R)-2-phosphoglycerate. Glu-207 serves as the catalytic Proton donor. 3 residues coordinate Mg(2+): Asp-244, Glu-291, and Asp-318. (2R)-2-phosphoglycerate is bound by residues Lys-343, Arg-372, Ser-373, and Lys-394. Lys-343 functions as the Proton acceptor in the catalytic mechanism.

This sequence belongs to the enolase family. Mg(2+) serves as cofactor.

It is found in the cytoplasm. It localises to the secreted. The protein resides in the cell surface. It catalyses the reaction (2R)-2-phosphoglycerate = phosphoenolpyruvate + H2O. It functions in the pathway carbohydrate degradation; glycolysis; pyruvate from D-glyceraldehyde 3-phosphate: step 4/5. In terms of biological role, catalyzes the reversible conversion of 2-phosphoglycerate (2-PG) into phosphoenolpyruvate (PEP). It is essential for the degradation of carbohydrates via glycolysis. The protein is Enolase of Staphylococcus saprophyticus subsp. saprophyticus (strain ATCC 15305 / DSM 20229 / NCIMB 8711 / NCTC 7292 / S-41).